Consider the following 395-residue polypeptide: tRNA (guanine-N(7)-)-methyltransferase (395 aa).

S-adenosyl-L-methionine contacts are provided by Glu-126, Glu-151, and Asp-178. Positions 204 and 234 each coordinate substrate.

The protein belongs to the class I-like SAM-binding methyltransferase superfamily. TrmB family.

It catalyses the reaction guanosine(46) in tRNA + S-adenosyl-L-methionine = N(7)-methylguanosine(46) in tRNA + S-adenosyl-L-homocysteine. It participates in tRNA modification; N(7)-methylguanine-tRNA biosynthesis. Catalyzes the formation of N(7)-methylguanine at position 46 (m7G46) in tRNA. The chain is tRNA (guanine-N(7)-)-methyltransferase from Campylobacter fetus subsp. fetus (strain 82-40).